Reading from the N-terminus, the 340-residue chain is GTP 3',8-cyclase (340 aa).

Positions 8–227 constitute a Radical SAM core domain; it reads KLGRPIRDLR…SMIQEEFDIE (220 aa). Arginine 17 contributes to the GTP binding site. Cysteine 24 and cysteine 28 together coordinate [4Fe-4S] cluster. Tyrosine 30 is an S-adenosyl-L-methionine binding site. Cysteine 31 is a binding site for [4Fe-4S] cluster. Position 71 (arginine 71) interacts with GTP. Glycine 75 lines the S-adenosyl-L-methionine pocket. Position 102 (threonine 102) interacts with GTP. Serine 126 lines the S-adenosyl-L-methionine pocket. GTP is bound at residue lysine 163. Residue methionine 197 coordinates S-adenosyl-L-methionine. Residues cysteine 261 and cysteine 264 each contribute to the [4Fe-4S] cluster site. Residue 266 to 268 participates in GTP binding; sequence RAR. Cysteine 278 is a [4Fe-4S] cluster binding site.

The protein belongs to the radical SAM superfamily. MoaA family. As to quaternary structure, monomer and homodimer. Requires [4Fe-4S] cluster as cofactor.

It catalyses the reaction GTP + AH2 + S-adenosyl-L-methionine = (8S)-3',8-cyclo-7,8-dihydroguanosine 5'-triphosphate + 5'-deoxyadenosine + L-methionine + A + H(+). It functions in the pathway cofactor biosynthesis; molybdopterin biosynthesis. Its function is as follows. Catalyzes the cyclization of GTP to (8S)-3',8-cyclo-7,8-dihydroguanosine 5'-triphosphate. In Staphylococcus carnosus (strain TM300), this protein is GTP 3',8-cyclase.